The sequence spans 221 residues: Eukaryotic translation initiation factor 4E-2 (221 aa).

Positions 1 to 20 (MADELNKAALEEYKSSSVED) are enriched in basic and acidic residues. Residues 1 to 36 (MADELNKAALEEYKSSSVEDRGEEGEIVGESDDTAS) are disordered. Residues 21-33 (RGEEGEIVGESDD) show a composition bias toward acidic residues. 2 EIF4G-binding regions span residues 46–49 (HPLE) and 56–92 (FDNPSGKSKQAAWGSSIRPIYTFSTAEDFWSVYNNIH). Residues 64-69 (KQAAWG), Lys-96, and 114-115 (WE) each bind mRNA. Cys-119 and Cys-157 form a disulfide bridge. The EIF4G-binding stretch occupies residues 140 to 149 (YTLLALIGEQ). Residues 164–169 (RVRQEK) and 209–213 (KKLDR) contribute to the mRNA site.

It belongs to the eukaryotic initiation factor 4E family. In terms of assembly, EIF4F is a multi-subunit complex, the composition of which varies with external and internal environmental conditions. It is composed of at least EIF4A, EIF4E and EIF4G. EIF4E is also known to interact with other partners. In higher plants two isoforms of EIF4F have been identified, named isoform EIF4F and isoform EIF(iso)4F. Isoform EIF4F has subunits p220 and p26, whereas isoform EIF(iso)4F has subunits p82 and p28. As to quaternary structure, (Microbial infection) Interacts with potyvirus viral genome-linked protein (VPg) in the nucleus; mostly potato virus Y (PVY-LYE84) and tobacco etch virus (TEV-HAT) VPg, but not with PVY-LYE90 and pepper mottle virus (PepMoV) VPg; these interactions are possible in susceptible hosts but impaired in resistant plants. According to the redox status, the Cys-119-Cys-157 disulfide bridge may have a role in regulating protein function by affecting its ability to bind capped mRNA.

Its subcellular location is the nucleus. The protein localises to the cytoplasm. In terms of biological role, component of the protein complex eIF4F, which is involved in the recognition of the mRNA cap, ATP-dependent unwinding of 5'-terminal secondary structure and recruitment of mRNA to the ribosome. Recognizes and binds the 7-methylguanosine-containing mRNA cap during an early step in the initiation of protein synthesis and facilitates ribosome binding by inducing the unwinding of the mRNAs secondary structures. Key component of recessive resistance to potyviruses. Functionally, (Microbial infection) Susceptibility host factor required for viral infection (e.g. potato virus Y (PVY) and tobacco etch virus (TEV)) by recruiting viral RNAs to the host ribosomal complex via an interaction with viral genome-linked protein (VPg). This chain is Eukaryotic translation initiation factor 4E-2, found in Solanum lycopersicum (Tomato).